The chain runs to 140 residues: Probable glycine cleavage system H protein 3 (140 aa).

In terms of domain architecture, Lipoyl-binding spans 29-110; sequence VVSIGVTDLG…PYDSWIVKIR (82 aa). Position 70 is an N6-lipoyllysine (K70).

It belongs to the GcvH family. As to quaternary structure, the glycine cleavage system is composed of four proteins: P, T, L and H. (R)-lipoate serves as cofactor.

Its function is as follows. The glycine cleavage system catalyzes the degradation of glycine. The H protein shuttles the methylamine group of glycine from the P protein to the T protein. This is Probable glycine cleavage system H protein 3 from Saccharolobus solfataricus (strain ATCC 35092 / DSM 1617 / JCM 11322 / P2) (Sulfolobus solfataricus).